Reading from the N-terminus, the 411-residue chain is Gamma-glutamyl phosphate reductase (411 aa).

Belongs to the gamma-glutamyl phosphate reductase family.

It is found in the cytoplasm. The catalysed reaction is L-glutamate 5-semialdehyde + phosphate + NADP(+) = L-glutamyl 5-phosphate + NADPH + H(+). The protein operates within amino-acid biosynthesis; L-proline biosynthesis; L-glutamate 5-semialdehyde from L-glutamate: step 2/2. Functionally, catalyzes the NADPH-dependent reduction of L-glutamate 5-phosphate into L-glutamate 5-semialdehyde and phosphate. The product spontaneously undergoes cyclization to form 1-pyrroline-5-carboxylate. The protein is Gamma-glutamyl phosphate reductase of Wolinella succinogenes (strain ATCC 29543 / DSM 1740 / CCUG 13145 / JCM 31913 / LMG 7466 / NCTC 11488 / FDC 602W) (Vibrio succinogenes).